We begin with the raw amino-acid sequence, 202 residues long: uncharacterized protein (202 aa).

Residues 1–6 (MITDFL) lie on the Cytoplasmic side of the membrane. The chain crosses the membrane as a helical; Signal-anchor for type II membrane protein span at residues 7-23 (LAFSILAVSTTLGVSNL). Residues 24-202 (NKQCRDLLQC…KNGKTRGHSG (179 aa)) lie on the Extracellular side of the membrane. N53 is a glycosylation site (N-linked (GlcNAc...) asparagine).

Its subcellular location is the membrane. This is an uncharacterized protein from Caenorhabditis elegans.